Reading from the N-terminus, the 554-residue chain is Glutamine--tRNA ligase (554 aa).

A 'HIGH' region motif is present at residues 33–43 (PEPNGYLHIGH). Residues 34 to 36 (EPN) and 40 to 46 (HIGHAKS) each bind ATP. Residues Asp66 and Tyr210 each contribute to the L-glutamine site. ATP-binding positions include Thr229, 259–260 (RL), and 267–269 (MSK). Positions 266 to 270 (VMSKR) match the 'KMSKS' region motif.

This sequence belongs to the class-I aminoacyl-tRNA synthetase family. In terms of assembly, monomer.

It is found in the cytoplasm. It carries out the reaction tRNA(Gln) + L-glutamine + ATP = L-glutaminyl-tRNA(Gln) + AMP + diphosphate. The chain is Glutamine--tRNA ligase from Clostridioides difficile (strain 630) (Peptoclostridium difficile).